Consider the following 113-residue polypeptide: Ribonuclease P protein component (113 aa).

It belongs to the RnpA family. In terms of assembly, consists of a catalytic RNA component (M1 or rnpB) and a protein subunit.

It carries out the reaction Endonucleolytic cleavage of RNA, removing 5'-extranucleotides from tRNA precursor.. RNaseP catalyzes the removal of the 5'-leader sequence from pre-tRNA to produce the mature 5'-terminus. It can also cleave other RNA substrates such as 4.5S RNA. The protein component plays an auxiliary but essential role in vivo by binding to the 5'-leader sequence and broadening the substrate specificity of the ribozyme. The sequence is that of Ribonuclease P protein component from Clostridium novyi (strain NT).